Reading from the N-terminus, the 374-residue chain is DNA replication and repair protein RecF (374 aa).

G34 to T41 is an ATP binding site.

This sequence belongs to the RecF family.

The protein resides in the cytoplasm. Functionally, the RecF protein is involved in DNA metabolism; it is required for DNA replication and normal SOS inducibility. RecF binds preferentially to single-stranded, linear DNA. It also seems to bind ATP. In Rhizobium etli (strain CIAT 652), this protein is DNA replication and repair protein RecF.